The primary structure comprises 310 residues: tRNA dimethylallyltransferase (310 aa).

11–18 contributes to the ATP binding site; it reads GPTGVGKT. Substrate is bound at residue 13-18; sequence TGVGKT.

It belongs to the IPP transferase family. In terms of assembly, monomer. It depends on Mg(2+) as a cofactor.

It carries out the reaction adenosine(37) in tRNA + dimethylallyl diphosphate = N(6)-dimethylallyladenosine(37) in tRNA + diphosphate. Its function is as follows. Catalyzes the transfer of a dimethylallyl group onto the adenine at position 37 in tRNAs that read codons beginning with uridine, leading to the formation of N6-(dimethylallyl)adenosine (i(6)A). The polypeptide is tRNA dimethylallyltransferase (Latilactobacillus sakei subsp. sakei (strain 23K) (Lactobacillus sakei subsp. sakei)).